The chain runs to 269 residues: MNFIVYPALDIRNGAVVRLQQGDYARQTRYDDQVLPRAQAFADSGATWMHLVDLDAAKAGGYTLAPLLRQITRATGLQVQTGGGVRSRDDVVRILDAGAARVVIGSLAVRQMACVIEWLQAFGPERITVALDTRQDAGGVWRLPVHGWTEVAEATLDVLAQQYAAAGLRHLLCTDIARDGMLSGPNMDVYTYLRALVPAVQLQVSGGARDVADVVAAKMAGCAGIVLGKALLEGRLALKEAVQHGSVADPGDPLPCGELTEPVCRYRSV.

Residue Asp10 is the Proton acceptor of the active site. Asp132 acts as the Proton donor in catalysis.

The protein belongs to the HisA/HisF family.

It localises to the cytoplasm. It carries out the reaction 1-(5-phospho-beta-D-ribosyl)-5-[(5-phospho-beta-D-ribosylamino)methylideneamino]imidazole-4-carboxamide = 5-[(5-phospho-1-deoxy-D-ribulos-1-ylimino)methylamino]-1-(5-phospho-beta-D-ribosyl)imidazole-4-carboxamide. It participates in amino-acid biosynthesis; L-histidine biosynthesis; L-histidine from 5-phospho-alpha-D-ribose 1-diphosphate: step 4/9. The polypeptide is 1-(5-phosphoribosyl)-5-[(5-phosphoribosylamino)methylideneamino] imidazole-4-carboxamide isomerase (Xylella fastidiosa (strain M12)).